Reading from the N-terminus, the 666-residue chain is Putative cysteine-rich receptor-like protein kinase 31 (666 aa).

An N-terminal signal peptide occupies residues 1–23; sequence MCLNTLCAILCFVLTVSFGFVSA. Gnk2-homologous domains follow at residues 24–130 and 136–245; these read QKCG…NNSF and LEPT…GYKY. The Extracellular segment spans residues 24-280; sequence QKCGESVFFR…PDGKKISTGV (257 aa). N-linked (GlcNAc...) asparagine glycans are attached at residues Asn52, Asn62, Asn104, Asn127, and Asn151. A helical transmembrane segment spans residues 281 to 301; sequence IVAIVVSAVIFVVLVALGLVI. Topologically, residues 302 to 666 are cytoplasmic; sequence WKRRQSYKTL…SASITRATPR (365 aa). In terms of domain architecture, Protein kinase spans 339–616; that stretch reads FSRNNKLGQG…IFQMLTNSSI (278 aa). Residues 345-353 and Lys367 contribute to the ATP site; that span reads LGQGGFGEV. Phosphotyrosine is present on Tyr412. The active-site Proton acceptor is the Asp464. Phosphoserine is present on Ser468. A Phosphothreonine modification is found at Thr504. Tyr512 carries the phosphotyrosine modification.

Belongs to the protein kinase superfamily. Ser/Thr protein kinase family. CRK subfamily.

The protein resides in the membrane. The catalysed reaction is L-seryl-[protein] + ATP = O-phospho-L-seryl-[protein] + ADP + H(+). It carries out the reaction L-threonyl-[protein] + ATP = O-phospho-L-threonyl-[protein] + ADP + H(+). This is Putative cysteine-rich receptor-like protein kinase 31 (CRK31) from Arabidopsis thaliana (Mouse-ear cress).